Consider the following 223-residue polypeptide: Probable glutathione S-transferase (223 aa).

One can recognise a GST N-terminal domain in the interval 2 to 81; it reads AEVKLLGFWY…YIDETFEGPS (80 aa). Glutathione is bound by residues serine 12, lysine 39, valine 53, and 65 to 66; that span reads ES. The GST C-terminal domain occupies 86–212; sequence DPYDRALARF…ELLAFFRARF (127 aa).

This sequence belongs to the GST superfamily. HSP26 family. As to expression, root tip-specific expression.

The catalysed reaction is RX + glutathione = an S-substituted glutathione + a halide anion + H(+). The sequence is that of Probable glutathione S-transferase from Nicotiana tabacum (Common tobacco).